A 290-amino-acid chain; its full sequence is Glycine--tRNA ligase alpha subunit (290 aa).

Belongs to the class-II aminoacyl-tRNA synthetase family. Tetramer of two alpha and two beta subunits.

The protein localises to the cytoplasm. The catalysed reaction is tRNA(Gly) + glycine + ATP = glycyl-tRNA(Gly) + AMP + diphosphate. This chain is Glycine--tRNA ligase alpha subunit, found in Prochlorococcus marinus (strain NATL1A).